The primary structure comprises 237 residues: Ribosomal RNA small subunit methyltransferase G (237 aa).

S-adenosyl-L-methionine is bound by residues G78, F83, A129 to E130, and R148.

It belongs to the methyltransferase superfamily. RNA methyltransferase RsmG family.

It localises to the cytoplasm. Functionally, specifically methylates the N7 position of a guanine in 16S rRNA. This Streptococcus pyogenes serotype M4 (strain MGAS10750) protein is Ribosomal RNA small subunit methyltransferase G.